We begin with the raw amino-acid sequence, 989 residues long: SWI/SNF-related matrix-associated actin-dependent regulator of chromatin subfamily A containing DEAD/H box 1 homolog (989 aa).

The interval 1-288 (MSTTSDFQTG…RRAKRGETKN (288 aa)) is disordered. Residues 72–105 (DDDDEDYVDETMPSEDEEDFDNNEEDEDDDDYEE) are compositionally biased toward acidic residues. The span at 109–120 (RKRKAPSKKKLV) shows a compositional bias: basic residues. Over residues 124–140 (ENYRREDSETPEPEMKR) the composition is skewed to basic and acidic residues. The segment covering 187 to 200 (DDESEDDFINDEEI) has biased composition (acidic residues). 2 stretches are compositionally biased toward basic and acidic residues: residues 201-221 (SEKG…GKDS) and 241-250 (AQKEQKKKAE). Acidic residues predominate over residues 251 to 276 (SDEDWEEDEDDMNADGDETPSDDSDI). The segment covering 277 to 288 (EERRAKRGETKN) has biased composition (basic and acidic residues). One can recognise a Helicase ATP-binding domain in the interval 406–574 (IMMYNKDLNA…ISLMYFVLSK (169 aa)). Position 419 to 426 (419 to 426 (DEMGLGKT)) interacts with ATP. Residues 525–528 (DEGH) carry the DEGH box motif. One can recognise a Helicase C-terminal domain in the interval 757 to 912 (QLDVMLPEIQ…GVKGQLDEDA (156 aa)). Positions 941-989 (RYDDVEDDSGDSKNGIDAEEAAKKEDEAVKEPVEKEQQKEEESQPSTSA) are disordered. Positions 950-982 (GDSKNGIDAEEAAKKEDEAVKEPVEKEQQKEEE) are enriched in basic and acidic residues.

This sequence belongs to the SNF2/RAD54 helicase family.

Its subcellular location is the nucleus. The protein localises to the chromosome. The enzyme catalyses ATP + H2O = ADP + phosphate + H(+). Its function is as follows. DNA helicase that possesses intrinsic ATP-dependent nucleosome-remodeling activity and is both required for DNA repair and heterochromatin organization. Promotes DNA end resection of double-strand breaks (DSBs) following DNA damage: probably acts by weakening histone DNA interactions in nucleosomes flanking DSBs. This Caenorhabditis elegans protein is SWI/SNF-related matrix-associated actin-dependent regulator of chromatin subfamily A containing DEAD/H box 1 homolog.